A 1017-amino-acid chain; its full sequence is Voltage-gated delayed rectifier potassium channel KCNH4 (1017 aa).

Residues 1-228 (MPVMKGLLAP…LLHYSVSKAI (228 aa)) lie on the Cytoplasmic side of the membrane. One can recognise a PAS domain in the interval 14–90 (FLDTIATRFD…QRLHKALEGH (77 aa)). The PAC domain occupies 93–145 (HRAEICFYRKDGSAFWCLLDMMPIKNEMGEVVLFLFSFKDITQSGSPGLGPQG). Residues 138 to 157 (SPGLGPQGGRGDSNHENSLG) are disordered. Residues 139 to 148 (PGLGPQGGRG) are compositionally biased toward gly residues. Residues 229 to 249 (WDGLILLATFYVAVTVPYNVC) traverse the membrane as a helical segment. Topologically, residues 250 to 259 (FSGDDDTPIT) are extracellular. A helical membrane pass occupies residues 260 to 280 (SRHTLVSDIAVEMLFILDIIL). The Cytoplasmic segment spans residues 281 to 302 (NFRTTYVSQSGQVISAPRSIGL). Residues 303–323 (HYLATWFFIDLIAALPFDLLY) form a helical membrane-spanning segment. Over 324 to 332 (IFNITVTSL) the chain is Extracellular. Asn-326 carries N-linked (GlcNAc...) asparagine glycosylation. A helical; Voltage-sensor membrane pass occupies residues 333–353 (VHLLKTVRLLRLLRLLQKLER). Residues 354 to 361 (YSQCSAVV) are Cytoplasmic-facing. The helical transmembrane segment at 362–382 (LTLLMSVFALLAHWMACIWYV) threads the bilayer. Residues 383–427 (IGRREMEANDPLLWDIGWLHELGKRLEVPYVNGSVGGPSRRSAYI) lie on the Extracellular side of the membrane. Asn-414 carries an N-linked (GlcNAc...) asparagine glycan. The segment at residues 428-448 (AALYFTLSSLTSVGFGNVCAN) is an intramembrane region (pore-forming). Residues 439–444 (SVGFGN) carry the Selectivity filter motif. Residues 449–482 (TDAEKIFSICTMLIGALMHAVVFGNVTAIIQRMY) are Extracellular-facing. Residue Asn-473 is glycosylated (N-linked (GlcNAc...) asparagine). A helical membrane pass occupies residues 483 to 503 (SRRSLYHSRMKDLKDFIRVHR). The Cytoplasmic portion of the chain corresponds to 504 to 1017 (LPRPLKQRML…SFQSRSDTFH (514 aa)). A cNMP-binding domain region spans residues 556–620 (LFGAASRGCL…AILGKGDLIG (65 aa)). A compositionally biased stretch (polar residues) spans 691 to 724 (GSDTSGLSRFSRSPRLSQPRSESLGSSSDKTLPS). 4 disordered regions span residues 691-749 (GSDT…LPNL), 772-803 (LVSS…RCSA), 821-875 (PDLS…EAEE), and 971-1017 (LLDL…DTFH). Residues 772-787 (LVSSPSLSPSLSPALA) show a composition bias toward low complexity. The span at 978–1002 (ILPPYPSEPDPLGPSPVPEASPPTP) shows a compositional bias: pro residues. Residues 1008-1017 (SFQSRSDTFH) show a composition bias toward polar residues.

This sequence belongs to the potassium channel family. H (Eag) (TC 1.A.1.20) subfamily. Kv12.3/KCNH4 sub-subfamily. In terms of assembly, the potassium channel is probably composed of a homo- or heterotetrameric complex of pore-forming alpha subunits that can associate with modulating beta subunits. As to expression, detected only in brain, in particular in the telencephalon. Detected in putamen and caudate nucleus, and at lower levels in cerebral cortex, occipital and hippocampus.

The protein resides in the membrane. The enzyme catalyses K(+)(in) = K(+)(out). Its function is as follows. Pore-forming (alpha) subunit of a voltage-gated delayed rectifier. Activates at more negative voltages, exhibits fast prepulse-independent activation kinetics and deactivates much more slowly, but shows no inactivation. The polypeptide is Voltage-gated delayed rectifier potassium channel KCNH4 (Homo sapiens (Human)).